Reading from the N-terminus, the 177-residue chain is ATP-dependent protease subunit HslV (177 aa).

The active site involves threonine 6. Na(+) is bound by residues alanine 162, cysteine 165, and threonine 168.

It belongs to the peptidase T1B family. HslV subfamily. A double ring-shaped homohexamer of HslV is capped on each side by a ring-shaped HslU homohexamer. The assembly of the HslU/HslV complex is dependent on binding of ATP.

The protein localises to the cytoplasm. The catalysed reaction is ATP-dependent cleavage of peptide bonds with broad specificity.. With respect to regulation, allosterically activated by HslU binding. In terms of biological role, protease subunit of a proteasome-like degradation complex believed to be a general protein degrading machinery. In Desulfovibrio desulfuricans (strain ATCC 27774 / DSM 6949 / MB), this protein is ATP-dependent protease subunit HslV.